Consider the following 235-residue polypeptide: Probable queuosine precursor transporter (235 aa).

Helical transmembrane passes span 17–37, 56–76, 87–107, 127–147, 155–175, and 201–221; these read IIWL…FVQI, FHST…DLTV, IIFV…VLFS, IAIA…IVFN, WWVA…FVFF, and FKLF…LNVI.

This sequence belongs to the vitamin uptake transporter (VUT/ECF) (TC 2.A.88) family. Q precursor transporter subfamily.

The protein localises to the cell inner membrane. Functionally, involved in the import of queuosine (Q) precursors, required for Q precursor salvage. The protein is Probable queuosine precursor transporter of Haemophilus influenzae (strain ATCC 51907 / DSM 11121 / KW20 / Rd).